Consider the following 23-residue polypeptide: Gastrin-releasing peptide (23 aa).

At Met23 the chain carries Methionine amide.

Belongs to the bombesin/neuromedin-B/ranatensin family.

Its subcellular location is the secreted. It localises to the cytoplasmic vesicle. The protein localises to the secretory vesicle lumen. In terms of biological role, stimulates the release of gastrin and other gastrointestinal hormones. The polypeptide is Gastrin-releasing peptide (grp) (Oncorhynchus mykiss (Rainbow trout)).